A 249-amino-acid chain; its full sequence is ATP synthase subunit a (249 aa).

The next 6 membrane-spanning stretches (helical) occupy residues 30 to 50 (QSPLFMLIAAAVVLVFLYVGM), 86 to 106 (FFPFVFAIFFFILAGNYLGLL), 115 to 135 (HIAVTFGLAIMVFIISILASI), 146 to 166 (FLPAGTPVWLAPLLVPIEIIS), 191 to 211 (VFAGFTIMLAGLGAFGHVLAI), and 218 to 238 (IALTALELLVGVLQAYVFAIL).

The protein belongs to the ATPase A chain family. As to quaternary structure, F-type ATPases have 2 components, CF(1) - the catalytic core - and CF(0) - the membrane proton channel. CF(1) has five subunits: alpha(3), beta(3), gamma(1), delta(1), epsilon(1). CF(0) has three main subunits: a(1), b(2) and c(9-12). The alpha and beta chains form an alternating ring which encloses part of the gamma chain. CF(1) is attached to CF(0) by a central stalk formed by the gamma and epsilon chains, while a peripheral stalk is formed by the delta and b chains.

The protein resides in the cell inner membrane. Its function is as follows. Key component of the proton channel; it plays a direct role in the translocation of protons across the membrane. In Gluconobacter oxydans (strain 621H) (Gluconobacter suboxydans), this protein is ATP synthase subunit a.